The sequence spans 296 residues: Ribosomal RNA small subunit methyltransferase H (296 aa).

Residues 38–40, Glu-57, Phe-88, Asp-103, and His-110 each bind S-adenosyl-L-methionine; that span reads GAH.

It belongs to the methyltransferase superfamily. RsmH family.

Its subcellular location is the cytoplasm. It carries out the reaction cytidine(1402) in 16S rRNA + S-adenosyl-L-methionine = N(4)-methylcytidine(1402) in 16S rRNA + S-adenosyl-L-homocysteine + H(+). In terms of biological role, specifically methylates the N4 position of cytidine in position 1402 (C1402) of 16S rRNA. The sequence is that of Ribosomal RNA small subunit methyltransferase H from Borreliella afzelii (strain PKo) (Borrelia afzelii).